The primary structure comprises 67 residues: Large ribosomal subunit protein bL35 (67 aa).

Belongs to the bacterial ribosomal protein bL35 family.

This is Large ribosomal subunit protein bL35 from Sphingopyxis alaskensis (strain DSM 13593 / LMG 18877 / RB2256) (Sphingomonas alaskensis).